The chain runs to 707 residues: Translation initiation factor eIF2B subunit epsilon (707 aa).

2 disordered regions span residues 489–526 (HDDIESDESGDEGDKSGGKIKNNKNNDDNPIEPDSVKF) and 686–707 (AEEESDDSDDSDDDDDDSDESD). In terms of domain architecture, W2 spans 516–693 (DNPIEPDSVK…KSAEEESDDS (178 aa)). Acidic residues predominate over residues 688–707 (EESDDSDDSDDDDDDSDESD).

Belongs to the eIF-2B gamma/epsilon subunits family. Component of the translation initiation factor 2B (eIF2B) complex which is a heterodecamer of two sets of five different subunits: alpha, beta, gamma, delta and epsilon. Subunits alpha, beta and delta comprise a regulatory subcomplex and subunits epsilon and gamma comprise a catalytic subcomplex. Within the complex, the hexameric regulatory complex resides at the center, with the two heterodimeric catalytic subcomplexes bound on opposite sides.

The protein resides in the cytoplasm. It is found in the cytosol. Functionally, acts as a component of the translation initiation factor 2B (eIF2B) complex, which catalyzes the exchange of GDP for GTP on eukaryotic initiation factor 2 (eIF2) gamma subunit. Its guanine nucleotide exchange factor activity is repressed when bound to eIF2 complex phosphorylated on the alpha subunit, thereby limiting the amount of methionyl-initiator methionine tRNA available to the ribosome and consequently global translation is repressed. The chain is Translation initiation factor eIF2B subunit epsilon (eif2b5) from Dictyostelium discoideum (Social amoeba).